We begin with the raw amino-acid sequence, 370 residues long: Apolipoprotein A-V (370 aa).

Residues 1–21 (MASMIALLTWALALLPALASA) form the signal peptide. A Phosphoserine modification is found at Ser-59.

This sequence belongs to the apolipoprotein A1/A4/E family. Interacts with GPIHBP1. Interacts with SORL1; this interaction leads to APOA5 internalization and sorting either to lysosomes and degradation, or to the trans-Golgi network.

Its subcellular location is the secreted. It is found in the early endosome. The protein localises to the late endosome. It localises to the golgi apparatus. The protein resides in the trans-Golgi network. Minor apolipoprotein mainly associated with HDL and to a lesser extent with VLDL. May also be associated with chylomicrons. Important determinant of plasma triglyceride (TG) levels by both being a potent stimulator of apo-CII lipoprotein lipase (LPL) TG hydrolysis and an inhibitor of the hepatic VLDL-TG production rate (without affecting the VLDL-apoB production rate). Activates poorly lecithin:cholesterol acyltransferase (LCAT) and does not enhance efflux of cholesterol from macrophages. Binds heparin. The chain is Apolipoprotein A-V (APOA5) from Acinonyx jubatus (Cheetah).